The primary structure comprises 239 residues: tRNA (guanine-N(1)-)-methyltransferase (239 aa).

S-adenosyl-L-methionine contacts are provided by residues Gly108 and 127-132 (IGDYVL).

It belongs to the RNA methyltransferase TrmD family. Homodimer.

The protein resides in the cytoplasm. It catalyses the reaction guanosine(37) in tRNA + S-adenosyl-L-methionine = N(1)-methylguanosine(37) in tRNA + S-adenosyl-L-homocysteine + H(+). In terms of biological role, specifically methylates guanosine-37 in various tRNAs. This is tRNA (guanine-N(1)-)-methyltransferase from Lactobacillus helveticus (strain DPC 4571).